The chain runs to 370 residues: Aminomethyltransferase (370 aa).

The protein belongs to the GcvT family. The glycine cleavage system is composed of four proteins: P, T, L and H.

It catalyses the reaction N(6)-[(R)-S(8)-aminomethyldihydrolipoyl]-L-lysyl-[protein] + (6S)-5,6,7,8-tetrahydrofolate = N(6)-[(R)-dihydrolipoyl]-L-lysyl-[protein] + (6R)-5,10-methylene-5,6,7,8-tetrahydrofolate + NH4(+). The glycine cleavage system catalyzes the degradation of glycine. This is Aminomethyltransferase from Stenotrophomonas maltophilia (strain R551-3).